The following is an 847-amino-acid chain: B-cell receptor CD22 (847 aa).

The signal sequence occupies residues 1-19; sequence MHLLGPWLLLLVLEYLAFS. Residues 20-138 enclose the Ig-like V-type domain; that stretch reads DSSKWAFEHP…MERIHLNVSE (119 aa). Over 20 to 687 the chain is Extracellular; it reads DSSKWAFEHP…YYSPETIGRR (668 aa). N-linked (GlcNAc...) asparagine glycans are attached at residues N67, N101, and N112. R120 is a binding site for N-acetylneuraminate. Residues N135, N164, and N231 are each glycosylated (N-linked (GlcNAc...) asparagine). Ig-like C2-type domains are found at residues 143 to 235, 242 to 326, 331 to 416, 419 to 500, 505 to 582, and 593 to 676; these read PHIQ…DTVQ, PKLE…VFLQ, PEPS…LDVQ, PKKV…VALN, PRDV…QTAS, and PRRL…STLT. C161 and C219 are joined by a disulfide. 2 cysteine pairs are disulfide-bonded: C265–C309 and C353–C396. N-linked (GlcNAc...) asparagine glycans are attached at residues N363, N428, N445, N448, and N479. Cystine bridges form between C442–C484 and C529–C571. Residues N574 and N634 are each glycosylated (N-linked (GlcNAc...) asparagine). C616 and C659 form a disulfide bridge. A helical membrane pass occupies residues 688-708; it reads VAVGFGSCLAILILAICGLKL. Over 709–847 the chain is Cytoplasmic; it reads QRRWKRTQSQ…ENVDYVILKH (139 aa). Phosphoserine is present on residues S725, S726, and S729. Short sequence motifs (ITIM motif) lie at residues 760 to 765 and 794 to 799; these read ISYTTL and VTYSVL. Position 762 is a phosphotyrosine (Y762). Phosphotyrosine occurs at positions 807, 822, and 842. Short sequence motifs (ITIM motif) lie at residues 820–825 and 840–845; these read IHYSEL and VDYVIL.

The protein belongs to the immunoglobulin superfamily. SIGLEC (sialic acid binding Ig-like lectin) family. As to quaternary structure, predominantly monomer of isoform CD22-beta. Also found as heterodimer of isoform CD22-beta and a shorter isoform. Interacts with PTPN6/SHP-1, LYN, SYK, PIK3R1/PIK3R2 and PLCG1 upon phosphorylation. Interacts with GRB2, INPP5D and SHC1 upon phosphorylation. May form a complex with INPP5D/SHIP, GRB2 and SHC1. Post-translationally, phosphorylation of Tyr-762, Tyr-807 and Tyr-822 are involved in binding to SYK, GRB2 and SYK, respectively. Phosphorylation of Tyr-842 is involved in binding to SYK, PLCG2 and PIK3R1/PIK3R2. In terms of processing, phosphorylated on tyrosine residues by LYN.

It localises to the cell membrane. In terms of biological role, most highly expressed siglec (sialic acid-binding immunoglobulin-like lectin) on B-cells that plays a role in various aspects of B-cell biology including differentiation, antigen presentation, and trafficking to bone marrow. Binds to alpha 2,6-linked sialic acid residues of surface molecules such as CD22 itself, CD45 and IgM in a cis configuration. Can also bind to ligands on other cells as an adhesion molecule in a trans configuration. Acts as an inhibitory coreceptor on the surface of B-cells and inhibits B-cell receptor induced signaling, characterized by inhibition of the calcium mobilization and cellular activation. Mechanistically, the immunoreceptor tyrosine-based inhibitory motif domain is phosphorylated by the Src kinase LYN, which in turn leads to the recruitment of the protein tyrosine phosphatase 1/PTPN6, leading to the negative regulation of BCR signaling. If this negative signaling from is of sufficient strength, apoptosis of the B-cell can be induced. The protein is B-cell receptor CD22 of Pan troglodytes (Chimpanzee).